A 124-amino-acid polypeptide reads, in one-letter code: U33-theraphotoxin-Cg1c (124 aa).

A signal peptide spans 1 to 17; that stretch reads MKFAVAIAFTLLVCVFA. Intrachain disulfides connect cysteine 26/cysteine 37, cysteine 31/cysteine 51, cysteine 36/cysteine 75, cysteine 61/cysteine 83, and cysteine 77/cysteine 94. Over residues 93 to 108 the composition is skewed to basic and acidic residues; it reads RCQEESGKSDKSKESQ. The interval 93–124 is disordered; that stretch reads RCQEESGKSDKSKESQGSDESEESEESKESSG. Over residues 109-118 the composition is skewed to acidic residues; it reads GSDESEESEE.

The protein belongs to the neurotoxin 32 family. In terms of tissue distribution, expressed by the venom gland.

It is found in the secreted. The sequence is that of U33-theraphotoxin-Cg1c from Chilobrachys guangxiensis (Chinese earth tiger tarantula).